Reading from the N-terminus, the 767-residue chain is 5-methyltetrahydropteroyltriglutamate--homocysteine methyltransferase (767 aa).

Residues 16–19 (RELK) and Lys122 each bind 5-methyltetrahydropteroyltri-L-glutamate. Residues 443–445 (IGS) and Glu496 contribute to the L-homocysteine site. L-methionine is bound by residues 443 to 445 (IGS) and Glu496. Residues 527–528 (RC) and Trp573 contribute to the 5-methyltetrahydropteroyltri-L-glutamate site. Position 611 (Asp611) interacts with L-homocysteine. Asp611 is a binding site for L-methionine. 5-methyltetrahydropteroyltri-L-glutamate is bound at residue Glu617. 3 residues coordinate Zn(2+): His653, Cys655, and Glu677. His706 serves as the catalytic Proton donor. Position 738 (Cys738) interacts with Zn(2+).

The protein belongs to the vitamin-B12 independent methionine synthase family. Zn(2+) is required as a cofactor.

The enzyme catalyses 5-methyltetrahydropteroyltri-L-glutamate + L-homocysteine = tetrahydropteroyltri-L-glutamate + L-methionine. Its pathway is amino-acid biosynthesis; L-methionine biosynthesis via de novo pathway; L-methionine from L-homocysteine (MetE route): step 1/1. Its function is as follows. Catalyzes the transfer of a methyl group from 5-methyltetrahydrofolate to homocysteine resulting in methionine formation. The protein is 5-methyltetrahydropteroyltriglutamate--homocysteine methyltransferase of Ectopseudomonas mendocina (strain ymp) (Pseudomonas mendocina).